The sequence spans 361 residues: Peptide chain release factor 1 (361 aa).

N5-methylglutamine is present on glutamine 235. The disordered stretch occupies residues 286–305; the sequence is IDSARSAERKQKVGSGDRSE.

Belongs to the prokaryotic/mitochondrial release factor family. Methylated by PrmC. Methylation increases the termination efficiency of RF1.

The protein localises to the cytoplasm. Peptide chain release factor 1 directs the termination of translation in response to the peptide chain termination codons UAG and UAA. The protein is Peptide chain release factor 1 of Rhodopseudomonas palustris (strain HaA2).